The following is a 308-amino-acid chain: 26S proteasome regulatory subunit rpn11 (308 aa).

An MPN domain is found at 30 to 165 (VYISSLALLK…IDAFRLINPS (136 aa)). Residues H112, H114, and D125 each coordinate Zn(2+). Residues 112-125 (HSHPGFGCWLSSVD) carry the JAMM motif motif.

It belongs to the peptidase M67A family. As to quaternary structure, the 26S proteasome is composed of a core protease, known as the 20S proteasome, capped at one or both ends by the 19S regulatory complex (RC). The RC is composed of at least 18 different subunits in two subcomplexes, the base and the lid, which form the portions proximal and distal to the 20S proteolytic core, respectively.

Its function is as follows. Acts as a regulatory subunit of the 26 proteasome which is involved in the ATP-dependent degradation of ubiquitinated proteins. In terms of biological role, transcription factor pap1 is controlled by the functional interaction between the positive regulator pad1 and negative regulator crm1. Both these proteins are also essential for cell viability and for the maintenance of chromosome structure. Pad1 is also responsible for resistance to staurosporine, and other drugs such as cycloheximide and caffeine. The sequence is that of 26S proteasome regulatory subunit rpn11 (rpn11) from Schizosaccharomyces pombe (strain 972 / ATCC 24843) (Fission yeast).